A 380-amino-acid polypeptide reads, in one-letter code: Homoserine O-acetyltransferase (380 aa).

Residues 70–366 (NAVLVFHALT…SPHGHDAFLI (297 aa)) form the AB hydrolase-1 domain. Ser186 serves as the catalytic Nucleophile. Arg250 is a binding site for substrate. Residues Asp333 and His361 contribute to the active site. A substrate-binding site is contributed by Asp362.

The protein belongs to the AB hydrolase superfamily. MetX family. As to quaternary structure, homodimer.

The protein localises to the cytoplasm. The enzyme catalyses L-homoserine + acetyl-CoA = O-acetyl-L-homoserine + CoA. It functions in the pathway amino-acid biosynthesis; L-methionine biosynthesis via de novo pathway; O-acetyl-L-homoserine from L-homoserine: step 1/1. Functionally, transfers an acetyl group from acetyl-CoA to L-homoserine, forming acetyl-L-homoserine. In Thermus thermophilus (strain ATCC 27634 / DSM 579 / HB8), this protein is Homoserine O-acetyltransferase.